The following is a 131-amino-acid chain: Fluoride-specific ion channel FluC 1 (131 aa).

A run of 3 helical transmembrane segments spans residues 38-58 (FPLS…IAMM), 69-89 (TVMM…TALN), and 108-128 (IATV…ALLA). Residues Gly-79 and Ser-82 each contribute to the Na(+) site.

The protein belongs to the fluoride channel Fluc/FEX (TC 1.A.43) family.

Its subcellular location is the cell membrane. The enzyme catalyses fluoride(in) = fluoride(out). With respect to regulation, na(+) is not transported, but it plays an essential structural role and its presence is essential for fluoride channel function. Fluoride-specific ion channel. Important for reducing fluoride concentration in the cell, thus reducing its toxicity. The chain is Fluoride-specific ion channel FluC 1 from Bifidobacterium longum (strain NCC 2705).